Consider the following 93-residue polypeptide: Small ribosomal subunit protein uS19c (93 aa).

It belongs to the universal ribosomal protein uS19 family.

It localises to the plastid. The protein localises to the chloroplast. Functionally, protein S19 forms a complex with S13 that binds strongly to the 16S ribosomal RNA. In Tetradesmus obliquus (Green alga), this protein is Small ribosomal subunit protein uS19c.